The primary structure comprises 329 residues: MIKEWENHFQQYKSQRCGYPKAQEGTPAEGEQNSRKPSRICSDNHPWVVQDFPHHKEDLCTPSPLGIWTAFYKSDPRIALGKYSPMEQEIQHLGGVHTRAARRFLVEKQYKEWRMLRELQKQSADYKRAIELGRDPSSYAVCGPPEKIWTAKVSVPAEEFQTPHREVTGIKKHIKRMQLARALENKQSSTDIGRLSPKTDKFSEEGEDDDTDSNDKANRGEKGEAKFEPTNKREVILNVAFKSEETKSCVVCHRNDRKTFLPVKRPERRITGLTNRNLFPITGFPGDLMLMNQDFVSKGIHPSDAIKIYWLPEEDLFKGRKQRPACCPH.

Disordered regions lie at residues 16–41 (RCGYPKAQEGTPAEGEQNSRKPSRIC) and 183–229 (LENK…KFEP). A compositionally biased stretch (basic and acidic residues) spans 213–229 (SNDKANRGEKGEAKFEP).

Expressed in testis and epididymis. Expressed at lower levels in ovary.

Functionally, dispensable for normal development and fertility. This is an uncharacterized protein from Mus musculus (Mouse).